The chain runs to 262 residues: Hydroxyethylthiazole kinase (262 aa).

A substrate-binding site is contributed by Met50. Residues Arg125 and Thr171 each contribute to the ATP site. Gly198 provides a ligand contact to substrate.

This sequence belongs to the Thz kinase family. The cofactor is Mg(2+).

The catalysed reaction is 5-(2-hydroxyethyl)-4-methylthiazole + ATP = 4-methyl-5-(2-phosphooxyethyl)-thiazole + ADP + H(+). Its pathway is cofactor biosynthesis; thiamine diphosphate biosynthesis; 4-methyl-5-(2-phosphoethyl)-thiazole from 5-(2-hydroxyethyl)-4-methylthiazole: step 1/1. In terms of biological role, catalyzes the phosphorylation of the hydroxyl group of 4-methyl-5-beta-hydroxyethylthiazole (THZ). The sequence is that of Hydroxyethylthiazole kinase from Citrobacter koseri (strain ATCC BAA-895 / CDC 4225-83 / SGSC4696).